The sequence spans 293 residues: Adenylyl-sulfate kinase 2, chloroplastic (293 aa).

The transit peptide at 1–59 (MEGLAIRASRPSVFCSIPGLGGDSHRKPPSDGFLKLPASSIPADSRKLVANSTSFHPIS) directs the protein to the chloroplast. Residue 122-130 (GLSGSGKST) coordinates ATP. Substrate contacts are provided by residues Asp152, Arg155, Arg169, Asn172, 195–196 (IS), and Gly245. The active-site Phosphoserine intermediate is Ser196.

This sequence belongs to the APS kinase family. As to quaternary structure, interacts with APK1. In terms of tissue distribution, expressed in root vasculature, root tips, leaf epidermal cells and funiculus of developing seeds.

It is found in the plastid. It localises to the chloroplast. It carries out the reaction adenosine 5'-phosphosulfate + ATP = 3'-phosphoadenylyl sulfate + ADP + H(+). Its pathway is sulfur metabolism; hydrogen sulfide biosynthesis; sulfite from sulfate: step 2/3. Catalyzes the synthesis of activated sulfate. Essential for plant reproduction and viability. Required for the production of glucosinolates. The polypeptide is Adenylyl-sulfate kinase 2, chloroplastic (APK2) (Arabidopsis thaliana (Mouse-ear cress)).